Reading from the N-terminus, the 143-residue chain is UPF0763 protein HH_0976 (143 aa).

This sequence belongs to the UPF0763 family.

In Helicobacter hepaticus (strain ATCC 51449 / 3B1), this protein is UPF0763 protein HH_0976.